A 588-amino-acid chain; its full sequence is Lysine--tRNA ligase (588 aa).

Residues 1–10 (MDSSVSTEPL) are compositionally biased toward polar residues. The segment at 1-54 (MDSSVSTEPLSKNALKREKKAKEKEQLEQEKKAAAVAKRQMEQHNLPENDDLDP) is disordered. Basic and acidic residues predominate over residues 20–47 (KAKEKEQLEQEKKAAAVAKRQMEQHNLP).

Belongs to the class-II aminoacyl-tRNA synthetase family.

Its subcellular location is the cytoplasm. The catalysed reaction is tRNA(Lys) + L-lysine + ATP = L-lysyl-tRNA(Lys) + AMP + diphosphate. The sequence is that of Lysine--tRNA ligase (LYSRS) from Solanum lycopersicum (Tomato).